An 872-amino-acid polypeptide reads, in one-letter code: Probable LRR receptor-like serine/threonine-protein kinase At1g51880 (872 aa).

A signal peptide spans 1–23 (MKSIHGFLLFLITAYVILESVQA). The Extracellular portion of the chain corresponds to 24 to 513 (QDQLGFISLD…GKSKKVPMIP (490 aa)). 9 N-linked (GlcNAc...) asparagine glycosylation sites follow: Asn-40, Asn-49, Asn-96, Asn-181, Asn-255, Asn-268, Asn-294, Asn-339, and Asn-401. 3 LRR repeats span residues 411-434 (RIISLNLAENKLTGTITPEISKLT), 435-457 (QLIELDLSKNDLSGEIPEFFADM), and 459-482 (LLKLINLSGNLGLNSTIPDSIQQR). Residues Asn-464 and Asn-472 are each glycosylated (N-linked (GlcNAc...) asparagine). Residues 514 to 534 (IVASVAGVFALLVILAIFFVV) form a helical membrane-spanning segment. Over 535–872 (RRKNGESNKG…SASEFSPGAR (338 aa)) the chain is Cytoplasmic. Thr-557 is subject to Phosphothreonine. One can recognise a Protein kinase domain in the interval 566–838 (NNFERVLGKG…HVVTELNECV (273 aa)). Residues 572 to 580 (LGKGGFGTV) and Lys-593 each bind ATP. Tyr-638 is modified (phosphotyrosine). The active-site Proton acceptor is the Asp-690. Ser-724 bears the Phosphoserine mark. 2 positions are modified to phosphothreonine: Thr-725 and Thr-730. Tyr-738 is modified (phosphotyrosine).

Belongs to the protein kinase superfamily. Ser/Thr protein kinase family.

The protein resides in the membrane. The enzyme catalyses L-seryl-[protein] + ATP = O-phospho-L-seryl-[protein] + ADP + H(+). The catalysed reaction is L-threonyl-[protein] + ATP = O-phospho-L-threonyl-[protein] + ADP + H(+). The protein is Probable LRR receptor-like serine/threonine-protein kinase At1g51880 of Arabidopsis thaliana (Mouse-ear cress).